A 243-amino-acid polypeptide reads, in one-letter code: Probable transcriptional regulatory protein LCABL_11860 (243 aa).

The tract at residues 1–23 (MSGHSKWHNIQGRKNAQDSKRGK) is disordered.

The protein belongs to the TACO1 family.

The protein localises to the cytoplasm. This chain is Probable transcriptional regulatory protein LCABL_11860, found in Lacticaseibacillus casei (strain BL23) (Lactobacillus casei).